We begin with the raw amino-acid sequence, 227 residues long: 4'-phosphopantetheinyl transferase PptT (227 aa).

Residues arginine 48, arginine 56, lysine 75 to lysine 78, threonine 92 to histidine 93, and aspartate 114 contribute to the CoA site. Mg(2+) contacts are provided by aspartate 114, alanine 115, and glutamate 116. 3 residues coordinate CoA: glutamate 157, lysine 161, and leucine 171.

The protein belongs to the P-Pant transferase superfamily. It depends on Mg(2+) as a cofactor.

The catalysed reaction is apo-[ACP] + CoA = holo-[ACP] + adenosine 3',5'-bisphosphate + H(+). With respect to regulation, inhibited by the amidino-urea compound 1-[(2,6-diethylphenyl)-3-N-ethylcarbamimodoyl]urea (compound 8918). It acts by binding to the phosphopantetheine pocket in the active site. Inhibition by compound 8918 kills M.tuberculosis. Functionally, transfers the 4'-phosphopantetheine moiety from coenzyme A to a Ser of acyl-carrier-protein. Involved in post-translational modification of various type-I polyketide synthases required for the formation of both mycolic acids and lipid virulence factors. Acts on Pks13, Mas, PpsA, PpsB, PpsC and PpsD. Also acts on AcpM, the meromycolate extension acyl carrier protein. In addition, is involved in the activation of the acyl carrier protein MbtL and the nonribosomal peptides synthases MbtB and MbtE, which are involved in the biosynthesis of the siderophore mycobactin. Its function is as follows. Required for the replication and survival of Mycobacterium during the acute and chronic phases of infection in mice. The sequence is that of 4'-phosphopantetheinyl transferase PptT from Mycobacterium tuberculosis (strain ATCC 25618 / H37Rv).